The following is a 665-amino-acid chain: ATPase WRNIP1 (665 aa).

The UBZ4-type zinc-finger motif lies at 17-44; the sequence is QVQCPVCQQMMPAAHINSHLDRCLLLHP. Zn(2+) is bound by residues C20, C23, H31, H35, and C39. The disordered stretch occupies residues 48–190; that stretch reads AEPAAGSHRA…DGEDDPGHWD (143 aa). Phosphoserine occurs at positions 65 and 75. Over residues 76–89 the composition is skewed to polar residues; it reads ESSALKQPATPTAA. A Glycyl lysine isopeptide (Lys-Gly) (interchain with G-Cter in ubiquitin) cross-link involves residue K81. The residue at position 85 (T85) is a Phosphothreonine. Phosphoserine occurs at positions 91 and 92. Positions 92 to 104 are enriched in acidic residues; sequence SEGEGEEGDDGGE. T116 bears the Phosphothreonine mark. A compositionally biased stretch (low complexity) spans 130–155; sequence RSSSPGRKGSGKRPAAAAAAGSASPR. Residue S139 is modified to Phosphoserine. A Glycyl lysine isopeptide (Lys-Gly) (interchain with G-Cter in ubiquitin) cross-link involves residue K141. At S153 the chain carries Phosphoserine. The span at 159 to 184 shows a compositional bias: acidic residues; it reads EAEAQEEEEAVGDGDGDGDADADGED. K225 participates in a covalent cross-link: Glycyl lysine isopeptide (Lys-Gly) (interchain with G-Cter in ubiquitin). 270-276 is a binding site for ATP; the sequence is PGCGKTT. Residues K301, K310, K316, K322, and K335 each participate in a glycyl lysine isopeptide (Lys-Gly) (interchain with G-Cter in ubiquitin) cross-link. Residue K482 forms a Glycyl lysine isopeptide (Lys-Gly) (interchain with G-Cter in SUMO2); alternate linkage. A Glycyl lysine isopeptide (Lys-Gly) (interchain with G-Cter in ubiquitin); alternate cross-link involves residue K482. Y534 and Y562 each carry phosphotyrosine. Residue K627 forms a Glycyl lysine isopeptide (Lys-Gly) (interchain with G-Cter in ubiquitin) linkage. A Glycyl lysine isopeptide (Lys-Gly) (interchain with G-Cter in ubiquitin); alternate cross-link involves residue K633. K633 bears the N6-acetyllysine; alternate mark. A Glycyl lysine isopeptide (Lys-Gly) (interchain with G-Cter in ubiquitin) cross-link involves residue K636.

This sequence belongs to the AAA ATPase family. RarA/MGS1/WRNIP1 subfamily. Forms homooligomers, possibly octamers. Directly interacts with POLD1, POLD2 and POLD4. Interacts with the N-terminal domain of WRN. Interacts (via UBZ4-type zinc finger) with monoubiquitin and polyubiquitin. Interacts with TRIM14 and PPP6C; these interactions positively regulate the RIGI signaling pathway. Post-translationally, sumoylated with SUMO1 and SUMO2/3. As to expression, ubiquitously expressed.

Its subcellular location is the nucleus. The protein resides in the cytoplasm. The enzyme catalyses ATP + H2O = ADP + phosphate + H(+). Functionally, functions as a modulator of initiation or reinitiation events during DNA polymerase delta-mediated DNA synthesis. In the presence of ATP, stimulation of DNA polymerase delta-mediated DNA synthesis is decreased. Also plays a role in the innate immune defense against viruses. Stabilizes the RIGI dsRNA interaction and promotes RIGI 'Lys-63'-linked polyubiquitination. In turn, RIGI transmits the signal through mitochondrial MAVS. The chain is ATPase WRNIP1 from Homo sapiens (Human).